The chain runs to 382 residues: Caspase-1-B (382 aa).

A propeptide spanning residues 1-98 is cleaved from the precursor; that stretch reads MTAQLNKVRK…HEHAPSPIQE (98 aa). Active-site residues include His-216 and Cys-270. The propeptide occupies 283 to 292; it reads DVAPAPLEDD.

It belongs to the peptidase C14A family. Heterotetramer that consists of two anti-parallel arranged heterodimers, each one formed by a 20 kDa (Caspase-1 subunit p20) and a 10 kDa (Caspase-1 subunit p10) subunit. As to quaternary structure, heterotetramer that consists of two anti-parallel arranged heterodimers, each one formed by a 20 kDa (Caspase-1 subunit p20) and a 10 kDa (Caspase-1 subunit p10) subunit. Can form a heterodimer with isoform epsilon which then has an inhibitory effect. Post-translationally, the two subunits are derived from the precursor sequence by an autocatalytic mechanism.

It is found in the cytoplasm. The protein resides in the cell membrane. The enzyme catalyses Strict requirement for an Asp residue at position P1 and has a preferred cleavage sequence of Tyr-Val-Ala-Asp-|-.. Its function is as follows. Thiol protease involved in a variety of inflammatory processes by proteolytically cleaving other proteins, such as the precursors of the inflammatory cytokines interleukin-1 beta (IL1B) and interleukin 18 (IL18) as well as the pyroptosis inducer Gasdermin-D (GSDMD), into active mature peptides. Plays a key role in cell immunity as an inflammatory response initiator: once activated through formation of an inflammasome complex, it initiates a pro-inflammatory response through the cleavage of the two inflammatory cytokines IL1B and IL18, releasing the mature cytokines which are involved in a variety of inflammatory processes. Cleaves a tetrapeptide after an Asp residue at position P1. Also initiates pyroptosis, a programmed lytic cell death pathway, through cleavage of GSDMD. This is Caspase-1-B (casp1-b) from Xenopus laevis (African clawed frog).